We begin with the raw amino-acid sequence, 216 residues long: uncharacterized protein (216 aa).

A helical transmembrane segment spans residues 7–29 (ILVIFFLIFFIGFEFSDMTLAFI).

The protein localises to the membrane. This is an uncharacterized protein from Archaeoglobus fulgidus (strain ATCC 49558 / DSM 4304 / JCM 9628 / NBRC 100126 / VC-16).